Consider the following 97-residue polypeptide: MNIRLLHDRVIVKRKEMESKSAGGIVLTGSAAGKSTRGEVIAVGKGRVLENGNIQPLDVKIGDTIIFNDGYSVKVEKIDNQDVLIMSESDILAIVEE.

This sequence belongs to the GroES chaperonin family. Heptamer of 7 subunits arranged in a ring. Interacts with the chaperonin GroEL.

It localises to the cytoplasm. Functionally, together with the chaperonin GroEL, plays an essential role in assisting protein folding. The GroEL-GroES system forms a nano-cage that allows encapsulation of the non-native substrate proteins and provides a physical environment optimized to promote and accelerate protein folding. GroES binds to the apical surface of the GroEL ring, thereby capping the opening of the GroEL channel. The protein is Co-chaperonin GroES of Buchnera aphidicola subsp. Thelaxes suberi.